The sequence spans 623 residues: Glutathione import ATP-binding protein GsiA (623 aa).

ABC transporter domains follow at residues 15–269 (VSGL…QTLL) and 325–564 (LRSG…RKLM). Residues 49 to 56 (GESGSGKS) and 357 to 364 (GESGSGKS) contribute to the ATP site.

The protein belongs to the ABC transporter superfamily. Glutathione importer (TC 3.A.1.5.11) family. The complex is composed of two ATP-binding proteins (GsiA), two transmembrane proteins (GsiC and GsiD) and a solute-binding protein (GsiB).

The protein localises to the cell inner membrane. The enzyme catalyses glutathione(out) + ATP + H2O = glutathione(in) + ADP + phosphate + H(+). Part of the ABC transporter complex GsiABCD involved in glutathione import. Responsible for energy coupling to the transport system. The protein is Glutathione import ATP-binding protein GsiA of Salmonella typhi.